A 217-amino-acid polypeptide reads, in one-letter code: GTP cyclohydrolase 1 (217 aa).

Zn(2+)-binding residues include Cys109, His112, and Cys180.

The protein belongs to the GTP cyclohydrolase I family. As to quaternary structure, toroid-shaped homodecamer, composed of two pentamers of five dimers.

It catalyses the reaction GTP + H2O = 7,8-dihydroneopterin 3'-triphosphate + formate + H(+). It participates in cofactor biosynthesis; 7,8-dihydroneopterin triphosphate biosynthesis; 7,8-dihydroneopterin triphosphate from GTP: step 1/1. In Aliivibrio fischeri (strain ATCC 700601 / ES114) (Vibrio fischeri), this protein is GTP cyclohydrolase 1.